The following is a 2206-amino-acid chain: Genome polyprotein (2206 aa).

The N-myristoyl glycine; by host moiety is linked to residue glycine 2. Residues 2–1517 are Cytoplasmic-facing; the sequence is GAQVSSQKVG…NINRAMTILQ (1516 aa). Amphipathic alpha-helix regions lie at residues 579–599 and 579–603; these read GVDD…LPKP and GVDD…QSNL. Catalysis depends on for protease 2A activity residues histidine 898 and aspartate 916. Residues cysteine 933 and cysteine 935 each coordinate Zn(2+). The active-site For protease 2A activity is the cysteine 987. Residues cysteine 993 and histidine 995 each coordinate Zn(2+). The membrane-binding stretch occupies residues 1125 to 1197; sequence GDSWLKKFTE…HQSCPSQEHQ (73 aa). The interval 1125 to 1263 is oligomerization; that stretch reads GDSWLKKFTE…SPGTGKSVAT (139 aa). The segment at 1146–1150 is RNA-binding; sequence SNKIS. One can recognise an SF3 helicase domain in the interval 1229–1385; it reads EHTINNYIQF…SEYSRDGKLN (157 aa). 1253 to 1260 provides a ligand contact to ATP; that stretch reads GSPGTGKS. 4 residues coordinate Zn(2+): cysteine 1393, cysteine 1396, cysteine 1405, and cysteine 1410. A C4-type zinc finger spans residues 1393–1410; the sequence is CKNCHQPANFKRCCPLVC. Positions 1437–1444 are RNA-binding; it reads EKNRRSNI. Residues 1448–1453 form an oligomerization region; the sequence is MEALFQ. An intramembrane segment occupies 1518–1533; the sequence is AVTTFAAVAGVVYVMY. At 1534–2206 the chain is on the cytoplasmic side; it reads KLFAGHQGAY…TLYRRWLDSF (673 aa). O-(5'-phospho-RNA)-tyrosine is present on tyrosine 1543. In terms of domain architecture, Peptidase C3 spans 1563 to 1741; the sequence is GPGFDYAVAM…FAAALKRSYF (179 aa). Active-site for protease 3C activity residues include histidine 1602, glutamate 1633, and cysteine 1709. The RdRp catalytic domain occupies 1972–2087; sequence EKLFAFDYTG…SYPHEVDASL (116 aa). Aspartate 1978 and aspartate 2073 together coordinate Mg(2+).

Belongs to the picornaviruses polyprotein family. As to quaternary structure, interacts with capsid protein VP1 and capsid protein VP3 to form heterotrimeric protomers. Interacts with capsid protein VP0, and capsid protein VP3 to form heterotrimeric protomers. Interacts with human PVR. Five protomers subsequently associate to form pentamers which serve as building blocks for the capsid. Interacts with capsid protein VP2, capsid protein VP3 and capsid protein VP4 following cleavage of capsid protein VP0. In terms of assembly, interacts with capsid protein VP1 and capsid protein VP3 in the mature capsid. As to quaternary structure, interacts with capsid protein VP0 and capsid protein VP1 to form heterotrimeric protomers. Five protomers subsequently associate to form pentamers which serve as building blocks for the capsid. Interacts with capsid protein VP4 in the mature capsid. Interacts with protein 2C; this interaction may be important for virion morphogenesis. Interacts with capsid protein VP1 and capsid protein VP3. In terms of assembly, homodimer. As to quaternary structure, homohexamer; forms a hexameric ring structure with 6-fold symmetry characteristic of AAA+ ATPases. Interacts (via N-terminus) with host RTN3 (via reticulon domain); this interaction is important for viral replication. Interacts with capsid protein VP3; this interaction may be important for virion morphogenesis. Interacts with protein 3CD. In terms of assembly, homodimer. Interacts with host GBF1. Interacts (via GOLD domain) with host ACBD3 (via GOLD domain); this interaction allows the formation of a viral protein 3A/ACBD3 heterotetramer with a 2:2 stoichiometry, which will stimulate the recruitment of host PI4KB in order to synthesize PI4P at the viral RNA replication sites. As to quaternary structure, interacts with RNA-directed RNA polymerase. Interacts with protein 3AB and with RNA-directed RNA polymerase. In terms of assembly, interacts with Viral protein genome-linked and with protein 3CD. Mg(2+) is required as a cofactor. Specific enzymatic cleavages in vivo by the viral proteases yield processing intermediates and the mature proteins. Post-translationally, myristoylation is required for the formation of pentamers during virus assembly. Further assembly of 12 pentamers and a molecule of genomic RNA generates the provirion. In terms of processing, during virion maturation, immature virions are rendered infectious following cleavage of VP0 into VP4 and VP2. This maturation seems to be an autocatalytic event triggered by the presence of RNA in the capsid and it is followed by a conformational change infectious virion. Myristoylation is required during RNA encapsidation and formation of the mature virus particle. Post-translationally, VPg is uridylylated by the polymerase into VPg-pUpU. This acts as a nucleotide-peptide primer for the genomic RNA replication.

It localises to the virion. Its subcellular location is the host cytoplasm. The protein localises to the host cytoplasmic vesicle membrane. The protein resides in the host nucleus. It catalyses the reaction a ribonucleoside 5'-triphosphate + H2O = a ribonucleoside 5'-diphosphate + phosphate + H(+). The catalysed reaction is Selective cleavage of Tyr-|-Gly bond in the picornavirus polyprotein.. The enzyme catalyses RNA(n) + a ribonucleoside 5'-triphosphate = RNA(n+1) + diphosphate. It carries out the reaction Selective cleavage of Gln-|-Gly bond in the poliovirus polyprotein. In other picornavirus reactions Glu may be substituted for Gln, and Ser or Thr for Gly.. Replication or transcription is subject to high level of random mutations by the nucleotide analog ribavirin. Functionally, forms an icosahedral capsid of pseudo T=3 symmetry with capsid proteins VP2 and VP3. The capsid is 300 Angstroms in diameter, composed of 60 copies of each capsid protein and enclosing the viral positive strand RNA genome. Capsid protein VP1 mainly forms the vertices of the capsid. Capsid protein VP1 interacts with host cell receptor PVR to provide virion attachment to target host cells. This attachment induces virion internalization predominantly through clathrin- and caveolin-independent endocytosis in Hela cells and through caveolin-mediated endocytosis in brain microvascular endothelial cells. Tyrosine kinases are probably involved in the entry process. Virus binding to PVR induces increased junctional permeability and rearrangement of junctional proteins. Modulation of endothelial tight junctions, as well as cytolytic infection of endothelial cells themselves, may result in loss of endothelial integrity which may help the virus to reach the CNS. After binding to its receptor, the capsid undergoes conformational changes. Capsid protein VP1 N-terminus (that contains an amphipathic alpha-helix) and capsid protein VP4 are externalized. Together, they shape a pore in the host membrane through which viral genome is translocated to host cell cytoplasm. Its function is as follows. Forms an icosahedral capsid of pseudo T=3 symmetry with capsid proteins VP2 and VP3. The capsid is 300 Angstroms in diameter, composed of 60 copies of each capsid protein and enclosing the viral positive strand RNA genome. In terms of biological role, lies on the inner surface of the capsid shell. After binding to the host receptor, the capsid undergoes conformational changes. Capsid protein VP4 is released, Capsid protein VP1 N-terminus is externalized, and together, they shape a pore in the host membrane through which the viral genome is translocated into the host cell cytoplasm. Component of immature procapsids, which is cleaved into capsid proteins VP4 and VP2 after maturation. Allows the capsid to remain inactive before the maturation step. Functionally, cysteine protease that cleaves viral polyprotein and specific host proteins. It is responsible for the autocatalytic cleavage between the P1 and P2 regions, which is the first cleavage occurring in the polyprotein. Also cleaves the host translation initiation factor EIF4G1, in order to shut down the capped cellular mRNA translation. Inhibits the host nucleus-cytoplasm protein and RNA trafficking by cleaving host members of the nuclear pores including NUP98, NUP62 and NUP153. Counteracts stress granule formation probably by antagonizing its assembly or promoting its dissassembly. Cleaves and inhibits host IFIH1/MDA5, thereby inhibiting the type-I IFN production and the establishment of the antiviral state. Cleaves and inhibits host MAVS, thereby inhibiting the type-I IFN production and the establishment of the antiviral state. Its function is as follows. Plays an essential role in the virus replication cycle by acting as a viroporin. Creates a pore in the host endoplasmic reticulum and as a consequence releases Ca2+ in the cytoplasm of infected cell. In turn, high levels of cytoplasmic calcium may trigger membrane trafficking and transport of viral ER-associated proteins to viroplasms, sites of viral genome replication. In terms of biological role, induces and associates with structural rearrangements of intracellular membranes. Displays RNA-binding, nucleotide binding and NTPase activities. May play a role in virion morphogenesis and viral RNA encapsidation by interacting with the capsid protein VP3. Localizes the viral replication complex to the surface of membranous vesicles. Together with protein 3CD binds the Cis-Active RNA Element (CRE) which is involved in RNA synthesis initiation. Acts as a cofactor to stimulate the activity of 3D polymerase, maybe through a nucleid acid chaperone activity. Functionally, localizes the viral replication complex to the surface of membranous vesicles. It inhibits host cell endoplasmic reticulum-to-Golgi apparatus transport and causes the disassembly of the Golgi complex, possibly through GBF1 interaction. This would result in depletion of MHC, trail receptors and IFN receptors at the host cell surface. Plays an essential role in viral RNA replication by recruiting ACBD3 and PI4KB at the viral replication sites, thereby allowing the formation of the rearranged membranous structures where viral replication takes place. Its function is as follows. Acts as a primer for viral RNA replication and remains covalently bound to viral genomic RNA. VPg is uridylylated prior to priming replication into VPg-pUpU. The oriI viral genomic sequence may act as a template for this. The VPg-pUpU is then used as primer on the genomic RNA poly(A) by the RNA-dependent RNA polymerase to replicate the viral genome. During genome replication, the VPg-RNA linkage is removed by the host TDP2, thereby accelerating replication. During the late stage of the replication cycle, host TDP2 is excluded from sites of viral RNA synthesis and encapsidation, allowing for the generation of progeny virions. In terms of biological role, involved in the viral replication complex and viral polypeptide maturation. It exhibits protease activity with a specificity and catalytic efficiency that is different from protease 3C. Protein 3CD lacks polymerase activity. Protein 3CD binds to the 5'UTR of the viral genome. Major viral protease that mediates proteolytic processing of the polyprotein. Cleaves host EIF5B, contributing to host translation shutoff. Also cleaves host PABPC1, contributing to host translation shutoff. Cleaves host RIGI and thus contributes to the inhibition of type I interferon production. Cleaves host NLRP1, triggers host N-glycine-mediated degradation of the autoinhibitory NLRP1 N-terminal fragment. Inhibits the integrated stress response (ISR) in the infected cell by cleaving host G3BP1. Stress granule formation is thus inhibited, which allows protein synthesis and viral replication. Functionally, replicates the viral genomic RNA on the surface of intracellular membranes. May form linear arrays of subunits that propagate along a strong head-to-tail interaction called interface-I. Covalently attaches UMP to a tyrosine of VPg, which is used to prime RNA synthesis. The positive stranded RNA genome is first replicated at virus induced membranous vesicles, creating a dsRNA genomic replication form. This dsRNA is then used as template to synthesize positive stranded RNA genomes. ss(+)RNA genomes are either translated, replicated or encapsidated. The chain is Genome polyprotein from Poliovirus type 3 (strain 23127).